The primary structure comprises 329 residues: 4-hydroxythreonine-4-phosphate dehydrogenase (329 aa).

Residues His136 and Thr137 each contribute to the substrate site. Residues His166, His211, and His266 each coordinate a divalent metal cation. Substrate is bound by residues Lys274, Asn283, and Arg292.

Belongs to the PdxA family. Homodimer. Zn(2+) serves as cofactor. Requires Mg(2+) as cofactor. The cofactor is Co(2+).

Its subcellular location is the cytoplasm. It carries out the reaction 4-(phosphooxy)-L-threonine + NAD(+) = 3-amino-2-oxopropyl phosphate + CO2 + NADH. The protein operates within cofactor biosynthesis; pyridoxine 5'-phosphate biosynthesis; pyridoxine 5'-phosphate from D-erythrose 4-phosphate: step 4/5. In terms of biological role, catalyzes the NAD(P)-dependent oxidation of 4-(phosphooxy)-L-threonine (HTP) into 2-amino-3-oxo-4-(phosphooxy)butyric acid which spontaneously decarboxylates to form 3-amino-2-oxopropyl phosphate (AHAP). The protein is 4-hydroxythreonine-4-phosphate dehydrogenase of Shigella flexneri serotype 5b (strain 8401).